Reading from the N-terminus, the 174-residue chain is Protein GrpE (174 aa).

Positions 1–35 (MAQDIKNEEVEEVQEEEVVETAEETTPEKSELDLA) are disordered. A compositionally biased stretch (acidic residues) spans 9 to 25 (EVEEVQEEEVVETAEET). Residues 26–35 (TPEKSELDLA) show a composition bias toward basic and acidic residues.

It belongs to the GrpE family. As to quaternary structure, homodimer.

It localises to the cytoplasm. In terms of biological role, participates actively in the response to hyperosmotic and heat shock by preventing the aggregation of stress-denatured proteins, in association with DnaK and GrpE. It is the nucleotide exchange factor for DnaK and may function as a thermosensor. Unfolded proteins bind initially to DnaJ; upon interaction with the DnaJ-bound protein, DnaK hydrolyzes its bound ATP, resulting in the formation of a stable complex. GrpE releases ADP from DnaK; ATP binding to DnaK triggers the release of the substrate protein, thus completing the reaction cycle. Several rounds of ATP-dependent interactions between DnaJ, DnaK and GrpE are required for fully efficient folding. The polypeptide is Protein GrpE (Streptococcus pneumoniae (strain ATCC BAA-255 / R6)).